A 115-amino-acid chain; its full sequence is NAD(P)H-quinone oxidoreductase subunit M (115 aa).

It belongs to the complex I NdhM subunit family. NDH-1 can be composed of about 15 different subunits; different subcomplexes with different compositions have been identified which probably have different functions.

It localises to the cellular thylakoid membrane. The enzyme catalyses a plastoquinone + NADH + (n+1) H(+)(in) = a plastoquinol + NAD(+) + n H(+)(out). It carries out the reaction a plastoquinone + NADPH + (n+1) H(+)(in) = a plastoquinol + NADP(+) + n H(+)(out). In terms of biological role, NDH-1 shuttles electrons from an unknown electron donor, via FMN and iron-sulfur (Fe-S) centers, to quinones in the respiratory and/or the photosynthetic chain. The immediate electron acceptor for the enzyme in this species is believed to be plastoquinone. Couples the redox reaction to proton translocation, and thus conserves the redox energy in a proton gradient. Cyanobacterial NDH-1 also plays a role in inorganic carbon-concentration. The protein is NAD(P)H-quinone oxidoreductase subunit M of Prochlorococcus marinus (strain MIT 9215).